Here is a 215-residue protein sequence, read N- to C-terminus: Pyridoxine/pyridoxamine 5'-phosphate oxidase (215 aa).

Substrate contacts are provided by residues 9–12 and Lys69; that span reads RRDY. FMN contacts are provided by residues 64-69, 79-80, Lys86, and Gln108; these read RILLLK and FT. Residues Tyr126, Arg130, and Ser134 each coordinate substrate. Residues 143–144 and Trp188 contribute to the FMN site; that span reads QS. 194–196 contributes to the substrate binding site; sequence RLH. Arg198 serves as a coordination point for FMN.

This sequence belongs to the pyridoxamine 5'-phosphate oxidase family. Homodimer. It depends on FMN as a cofactor.

The enzyme catalyses pyridoxamine 5'-phosphate + O2 + H2O = pyridoxal 5'-phosphate + H2O2 + NH4(+). It carries out the reaction pyridoxine 5'-phosphate + O2 = pyridoxal 5'-phosphate + H2O2. Its pathway is cofactor metabolism; pyridoxal 5'-phosphate salvage; pyridoxal 5'-phosphate from pyridoxamine 5'-phosphate: step 1/1. The protein operates within cofactor metabolism; pyridoxal 5'-phosphate salvage; pyridoxal 5'-phosphate from pyridoxine 5'-phosphate: step 1/1. Catalyzes the oxidation of either pyridoxine 5'-phosphate (PNP) or pyridoxamine 5'-phosphate (PMP) into pyridoxal 5'-phosphate (PLP). This is Pyridoxine/pyridoxamine 5'-phosphate oxidase from Pseudomonas fluorescens (strain ATCC BAA-477 / NRRL B-23932 / Pf-5).